Reading from the N-terminus, the 630-residue chain is Alpha-1,3-mannosyltransferase MNT3 (630 aa).

Topologically, residues 1–14 (MLKSLKSRRLILKR) are cytoplasmic. Residues 15–31 (LVTLLLSLFFSYLIFSA) form a helical; Signal-anchor for type II membrane protein membrane-spanning segment. The Lumenal segment spans residues 32–630 (SRNVTSSNKL…NDISRTWNAN (599 aa)). N-linked (GlcNAc...) asparagine glycans are attached at residues Asn34 and Asn168.

This sequence belongs to the MNN1/MNT family.

It is found in the golgi apparatus membrane. It participates in protein modification; protein glycosylation. Its function is as follows. Mannosyltransferase involved in adding the 4th and 5th mannose residues of O-linked glycans. The chain is Alpha-1,3-mannosyltransferase MNT3 (MNT3) from Saccharomyces cerevisiae (strain ATCC 204508 / S288c) (Baker's yeast).